Reading from the N-terminus, the 131-residue chain is Small ribosomal subunit protein uS8 (131 aa).

This sequence belongs to the universal ribosomal protein uS8 family. As to quaternary structure, part of the 30S ribosomal subunit. Contacts proteins S5 and S12.

Functionally, one of the primary rRNA binding proteins, it binds directly to 16S rRNA central domain where it helps coordinate assembly of the platform of the 30S subunit. In Azoarcus sp. (strain BH72), this protein is Small ribosomal subunit protein uS8.